Consider the following 334-residue polypeptide: Ornithine carbamoyltransferase (334 aa).

Carbamoyl phosphate is bound by residues 57–60, Gln-84, Arg-108, and 135–138; these read STRT and HPTQ. L-ornithine contacts are provided by residues Asn-169, Asp-233, and 237-238; that span reads SM. Carbamoyl phosphate-binding positions include 275–276 and Arg-320; that span reads CL.

Belongs to the aspartate/ornithine carbamoyltransferase superfamily. OTCase family.

The protein resides in the cytoplasm. The enzyme catalyses carbamoyl phosphate + L-ornithine = L-citrulline + phosphate + H(+). It functions in the pathway amino-acid biosynthesis; L-arginine biosynthesis; L-arginine from L-ornithine and carbamoyl phosphate: step 1/3. In terms of biological role, reversibly catalyzes the transfer of the carbamoyl group from carbamoyl phosphate (CP) to the N(epsilon) atom of ornithine (ORN) to produce L-citrulline. In Vibrio cholerae serotype O1 (strain ATCC 39315 / El Tor Inaba N16961), this protein is Ornithine carbamoyltransferase.